We begin with the raw amino-acid sequence, 1088 residues long: Methionine S-methyltransferase (1088 aa).

It belongs to the class I-like SAM-binding methyltransferase superfamily. Homotetramer. Expressed in the shoot, scutellum, and aleurone cells but not in the root or endosperm.

It is found in the cytoplasm. It catalyses the reaction L-methionine + S-adenosyl-L-methionine = S-methyl-L-methionine + S-adenosyl-L-homocysteine. Its function is as follows. Catalyzes the S-methylmethionine (SMM) biosynthesis from adenosyl-L-homocysteine (AdoMet) and methionine. SMM biosynthesis (by MMT1) and degradation (by HMT-1, HMT-2 and HMT-3) constitute the SMM cycle in plants, which is probably required to achieve short term control of AdoMet level. Also able to catalyze the selenium-methylmethionine (SeMM) from AdoMet and selenium-methionine (SeMet). May play a role in phoem sulfur transport; such function is however not essential. In Hordeum vulgare (Barley), this protein is Methionine S-methyltransferase (MMT1).